Reading from the N-terminus, the 68-residue chain is Pleurocidin-like peptide WF4 (68 aa).

A signal peptide spans 1–22 (MKFTATFLMMFIFVLMVEPGEC). The propeptide occupies 48–68 (GEQQDLDKRAVDEDPNVIVFE).

It belongs to the pleurocidin family.

Its subcellular location is the secreted. Its function is as follows. Antimicrobial peptide. This is Pleurocidin-like peptide WF4 (ple4) from Pseudopleuronectes americanus (Winter flounder).